The sequence spans 221 residues: Sperm acrosome membrane-associated protein 3 (221 aa).

Over 1-69 (MGICMSMYTQ…EARSRAPRRQ (69 aa)) the chain is Cytoplasmic. A helical; Signal-anchor for type II membrane protein membrane pass occupies residues 70 to 90 (LCPPGITWLALAYLLSCLLAS). Residues 91–221 (SKAKVFSRCE…LSDWVDGCDF (131 aa)) lie on the Extracellular side of the membrane. The region spanning 94–221 (KVFSRCELAK…LSDWVDGCDF (128 aa)) is the C-type lysozyme domain. Intrachain disulfides connect C99-C219, C123-C207, C157-C172, and C168-C186.

It belongs to the glycosyl hydrolase 22 family. As to quaternary structure, interacts with ASTL. The processed form is expressed in sperm (at protein level). Expressed strongly in testis and epididymis and weakly in pancreas.

It localises to the cytoplasmic vesicle. Its subcellular location is the secretory vesicle. It is found in the acrosome membrane. The protein resides in the secreted. Functionally, sperm surface membrane protein that may be involved in sperm-egg plasma membrane adhesion and fusion during fertilization. It could be a potential receptor for the egg oligosaccharide residue N-acetylglucosamine, which is present in the extracellular matrix over the egg plasma membrane. The processed form has no detectable bacteriolytic activity in vitro. The chain is Sperm acrosome membrane-associated protein 3 (Spaca3) from Mus musculus (Mouse).